A 458-amino-acid chain; its full sequence is MDQSNRYARLDLKEADLIAGGRHVLCAYVMKPKAGYGYLETAAHFAAESSTGTNVEVSTTDDFTRGVDALVYEIDPEKEIMKIAYPVELFDRNIIDGRAMLCSFLTLTIGNNQGMGDVEYAKMHEFYVPPCYLRLFDGPSMNIADMWRVLGRPVVDGGMVVGTIIKPKLGLRPKPFADACYEFWLGGDFIKNDEPQGNQTFAPLKETIRLVADAMKRAQDETGEAKLFSANITADDHYEMVARGEYILETFGENADHVAFLVDGYVTGPAAITTARRQFPRQFLHYHRAGHGAVTSPQSMRGYTAFVLSKMSRLQGASGIHTGTMGYGKMEGDASDKIMAYMLTDEAAQGPFYHQDWLGMKATTPIISGGMNALRLPGFFDNLGHSNVIQTSGGGAFGHLDGGTAGAKSLRQSCDAWKAGVDLVTYAKSHRELARAFESFPNDADKLYPGWRVALGVN.

Residue N111 participates in substrate binding. The active-site Proton acceptor is the K166. Residue K168 participates in substrate binding. Positions 191, 193, and 194 each coordinate Mg(2+). K191 is subject to N6-carboxylysine. Residue H287 is the Proton acceptor of the active site. R288, H321, and S368 together coordinate substrate.

Belongs to the RuBisCO large chain family. Type II subfamily. Homodimer. It depends on Mg(2+) as a cofactor.

The enzyme catalyses 2 (2R)-3-phosphoglycerate + 2 H(+) = D-ribulose 1,5-bisphosphate + CO2 + H2O. The catalysed reaction is D-ribulose 1,5-bisphosphate + O2 = 2-phosphoglycolate + (2R)-3-phosphoglycerate + 2 H(+). RuBisCO catalyzes two reactions: the carboxylation of D-ribulose 1,5-bisphosphate, the primary event in carbon dioxide fixation, as well as the oxidative fragmentation of the pentose substrate. Both reactions occur simultaneously and in competition at the same active site. The sequence is that of Ribulose bisphosphate carboxylase (cbbM) from Rhodobacter capsulatus (strain ATCC BAA-309 / NBRC 16581 / SB1003).